A 507-amino-acid chain; its full sequence is Probable D-lactate dehydrogenase, mitochondrial (507 aa).

Residues 1 to 52 (MARLLRSATWELFPWRGYCSQKAKGELCRDFVEALKAVVGGSHVSTAAVVRE) constitute a mitochondrion transit peptide. K36 carries the post-translational modification N6-acetyllysine. Positions 62-265 (RCEPPDAVVW…TATTLRLHPA (204 aa)) constitute an FAD-binding PCMH-type domain. K315 is modified (N6-acetyllysine). K358 bears the N6-acetyllysine; alternate mark. N6-succinyllysine; alternate is present on K358. N6-acetyllysine occurs at positions 445 and 472.

Belongs to the FAD-binding oxidoreductase/transferase type 4 family. As to quaternary structure, interacts with CSRP3. It depends on FAD as a cofactor. In terms of tissue distribution, expressed moderately in heart and liver and at lower levels in skeletal muscle and kidney.

The protein localises to the mitochondrion. It catalyses the reaction (R)-lactate + 2 Fe(III)-[cytochrome c] = 2 Fe(II)-[cytochrome c] + pyruvate + 2 H(+). Its function is as follows. Involved in D-lactate, but not L-lactate catabolic process. This chain is Probable D-lactate dehydrogenase, mitochondrial, found in Homo sapiens (Human).